Reading from the N-terminus, the 470-residue chain is Protein naked cuticle homolog 1 (470 aa).

Disordered regions lie at residues methionine 1–aspartate 21 and proline 90–glycine 114. Glycine 2 carries the N-myristoyl glycine lipid modification. Over residues glutamate 92 to serine 109 the composition is skewed to basic and acidic residues. The interval glutamine 125–aspartate 190 is interaction with DVL1, DVL2 and DVL3. Residues glutamate 131–valine 166 form the EF-hand domain. Aspartate 144, aspartate 146, asparagine 148, lysine 150, and aspartate 155 together coordinate Ca(2+). A compositionally biased stretch (polar residues) spans serine 192–leucine 205. Disordered stretches follow at residues serine 192 to arginine 228, glutamine 271 to aspartate 314, glycine 337 to glycine 357, and glycine 446 to threonine 470. The span at proline 210–glutamine 227 shows a compositional bias: basic and acidic residues. Residues glutamine 271–glutamine 281 are compositionally biased toward polar residues. Residues histidine 452–threonine 470 show a composition bias toward basic residues.

The protein belongs to the NKD family. In terms of assembly, interacts with DVL1, DVL2, DVL3 and PPP2R3A. Expressed in colon, heart, kidney, leukocyte, liver, lung, ovary, pancreas, placenta, prostate, skeletal muscle, small intestine and spleen.

Its subcellular location is the cell membrane. The protein resides in the cytoplasm. Its function is as follows. Cell autonomous antagonist of the canonical Wnt signaling pathway. May activate a second Wnt signaling pathway that controls planar cell polarity. This chain is Protein naked cuticle homolog 1 (NKD1), found in Homo sapiens (Human).